The chain runs to 146 residues: Transcriptional regulator MraZ (146 aa).

SpoVT-AbrB domains are found at residues 5 to 52 and 81 to 124; these read SAAL…PRAE and AAEI…KEES.

It belongs to the MraZ family. Forms oligomers.

Its subcellular location is the cytoplasm. The protein resides in the nucleoid. The protein is Transcriptional regulator MraZ of Alcanivorax borkumensis (strain ATCC 700651 / DSM 11573 / NCIMB 13689 / SK2).